The following is a 285-amino-acid chain: uncharacterized protein (285 aa).

The 108-residue stretch at 92 to 199 (TLLLADVEES…PTINRTARLR (108 aa)) folds into the Guanylate cyclase domain.

The protein belongs to the adenylyl cyclase class-4/guanylyl cyclase family.

This is an uncharacterized protein from Mycobacterium tuberculosis (strain CDC 1551 / Oshkosh).